Here is a 122-residue protein sequence, read N- to C-terminus: Flagellar protein FliT (122 aa).

The interval 1-50 (MERQQQLLAAYQQIHSLSSQMIALAQTERWEDLVELELAYVTAVESTAAF) is required for homodimerization. The segment at 60–98 (LQELLRNKLQQILDNETELKRLLQQRMDQLKELIGQSTR) is fliD binding.

The protein belongs to the FliT family. Homodimer. Interacts with FliD and FlhC.

The protein localises to the cytoplasm. Its subcellular location is the cytosol. Functionally, dual-function protein that regulates the transcription of class 2 flagellar operons and that also acts as an export chaperone for the filament-capping protein FliD. As a transcriptional regulator, acts as an anti-FlhDC factor; it directly binds FlhC, thus inhibiting the binding of the FlhC/FlhD complex to class 2 promoters, resulting in decreased expression of class 2 flagellar operons. As a chaperone, effects FliD transition to the membrane by preventing its premature polymerization, and by directing it to the export apparatus. In Serratia proteamaculans (strain 568), this protein is Flagellar protein FliT.